The following is a 236-amino-acid chain: Proteasome subunit alpha (236 aa).

Belongs to the peptidase T1A family. As to quaternary structure, the 20S proteasome core is composed of 14 alpha and 14 beta subunits that assemble into four stacked heptameric rings, resulting in a barrel-shaped structure. The two inner rings, each composed of seven catalytic beta subunits, are sandwiched by two outer rings, each composed of seven alpha subunits. The catalytic chamber with the active sites is on the inside of the barrel. Has a gated structure, the ends of the cylinder being occluded by the N-termini of the alpha-subunits. Is capped by the proteasome-associated ATPase, ARC.

Its subcellular location is the cytoplasm. It functions in the pathway protein degradation; proteasomal Pup-dependent pathway. With respect to regulation, the formation of the proteasomal ATPase ARC-20S proteasome complex, likely via the docking of the C-termini of ARC into the intersubunit pockets in the alpha-rings, may trigger opening of the gate for substrate entry. Interconversion between the open-gate and close-gate conformations leads to a dynamic regulation of the 20S proteasome proteolysis activity. Its function is as follows. Component of the proteasome core, a large protease complex with broad specificity involved in protein degradation. This Pseudarthrobacter chlorophenolicus (strain ATCC 700700 / DSM 12829 / CIP 107037 / JCM 12360 / KCTC 9906 / NCIMB 13794 / A6) (Arthrobacter chlorophenolicus) protein is Proteasome subunit alpha.